An 815-amino-acid chain; its full sequence is Heme-copper oxidase subunit I+III (815 aa).

Residues 1–467 form a COX1 region; that stretch reads MVSRLRGFLA…QLSTLGAFIF (467 aa). Residues 26–46 form a helical membrane-spanning segment; it reads LLYLVTSIAFLLIAGSLALLF. H70 is a binding site for Fe(II)-heme a. The next 18 membrane-spanning stretches (helical) occupy residues 71–91, 105–125, 157–177, 197–217, 242–262, 281–301, 314–334, 339–359, 380–400, 419–439, 463–483, 580–600, 637–657, 683–703, 708–728, 736–756, 758–778, and 791–811; these read GLIM…NYIV, LNAL…ASFF, LAIF…LVTI, ILFT…GGAL, LFWF…LGAM, LTAF…HMFI, ITTI…IFTL, LVYT…IIGG, VVAH…IAGL, IHFA…FALM, GAFI…YSLV, ALFG…VFLL, WVFI…YFFI, LINT…YLGV, YLIT…FLTV, LLIA…YVTT, AHAL…VKLF, and VLAV…VFPL. 4 residues coordinate Cu cation: H248, Y252, H297, and H298. A cross-link (1'-histidyl-3'-tyrosine (His-Tyr)) is located at residues 248–252; the sequence is HPEVY. H383 contacts heme a3. H385 provides a ligand contact to Fe(II)-heme a. The interval 545 to 815 is COX3; that stretch reads DVSNVPLSGG…TLVFPLYYLV (271 aa).

This sequence in the N-terminal section; belongs to the heme-copper respiratory oxidase family. In the C-terminal section; belongs to the cytochrome c oxidase subunit 3 family. Heme is required as a cofactor. Requires Cu cation as cofactor.

It is found in the cell membrane. The polypeptide is Heme-copper oxidase subunit I+III (aoxB) (Aeropyrum pernix (strain ATCC 700893 / DSM 11879 / JCM 9820 / NBRC 100138 / K1)).